A 230-amino-acid polypeptide reads, in one-letter code: uncharacterized protein (230 aa).

Catalysis depends on charge relay system residues serine 124 and histidine 158.

The protein belongs to the peptidase S51 family.

This is an uncharacterized protein from Bacillus subtilis (strain 168).